Reading from the N-terminus, the 606-residue chain is MFSQRYDPLAEENNGSRPADSGFGVSLKKRKLSDDESSDEEEEEEETDESEHESSQDEDINEEEPEEEDEDTNKVDDNMEIDSQPEVDPDYIHKHQAIFNKFKQSTESETIEQDKEEDGEEDANIEQHSLVPLPQPALPRDRKLSSVSTHTKNLDWLTKPQYASPSDKKAFTDFKSSSFMIKNLEKMGFTEAFSVQISVLNMMLPEIEAQKLKPDRVGDILVNASTGSGKTLAYSIPIIESLYRRVVPRVRVIILVPTKPLINQVKSTLLQLSSGTNLQIAALKNDVSINDEKDSLTKSVPDIIVSTPGRLVEHLLNDSINLSSLQYLIIDEADRLLNQSFQNWSNVLLDKIDSQINIAEVWKLSVQKLVFSATLTTDAGKLSSLKFYNPRLIIVNDSKQLVNEIFTVPVTLSEFKIHLGVAKNSLKPLILTKFLISTNKLSNVLIFTKSNESSIRLTELLTSLFQKLSINLKIAFINSTNNRTSIRSKILKQFSNQEVNILITTDLIARGIDVASITDVINYDLPNSSREYVHRVGRTARANQVGYAYSFCFGKGENSWFKKLAHEVSRSKEVENVDLNVKELISDRDEEIYQQALHELQQQAKK.

Disordered regions lie at residues 1–88 (MFSQ…PEVD) and 101–124 (KFKQSTESETIEQDKEEDGEEDAN). 3 stretches are compositionally biased toward acidic residues: residues 35-71 (DESSDEEEEEEETDESEHESSQDEDINEEEPEEEDED), 78-88 (NMEIDSQPEVD), and 109-124 (ETIEQDKEEDGEEDAN). A Q motif motif is present at residues 169–197 (KAFTDFKSSSFMIKNLEKMGFTEAFSVQI). The Helicase ATP-binding domain occupies 211-393 (KLKPDRVGDI…SLKFYNPRLI (183 aa)). ATP is bound at residue 224–231 (ASTGSGKT). Positions 331–334 (DEAD) match the DEAD box motif. Positions 430-585 (ILTKFLISTN…NVDLNVKELI (156 aa)) constitute a Helicase C-terminal domain.

The protein belongs to the DEAD box helicase family. DDX51/DBP6 subfamily. In terms of assembly, associated with pre-ribosomal particles.

It is found in the nucleus. It localises to the nucleolus. The enzyme catalyses ATP + H2O = ADP + phosphate + H(+). Its function is as follows. ATP-binding RNA helicase involved in the biogenesis of 60S ribosomal subunits and is required for the normal formation of 25S and 5.8S rRNAs. In Candida albicans (strain SC5314 / ATCC MYA-2876) (Yeast), this protein is ATP-dependent RNA helicase DBP6 (DBP6).